A 227-amino-acid chain; its full sequence is MKPMPKQREMRRLRDRISDIERQLSDCRRNNESNADMEREMQRLRDRIMDLDRQLNECKRNGNGTSSEEVNRLKTRIRNLKRSLEICSKDESELYSAYKTKLGRAREQISNLQESLRRERESDKTDSYYRRELTRERNKIVELEKELNKCFDAKYIDEINSKKTRISDLERQLAACKSNGGSNGNMDQYKREIESLKRELAECRRGNNGSHSDCKYYDEEARDCVKS.

The stretch at 4–210 (MPKQREMRRL…AECRRGNNGS (207 aa)) forms a coiled coil.

In Bos taurus (Bovine), this protein is 27 kDa A-type inclusion protein.